Reading from the N-terminus, the 117-residue chain is Large ribosomal subunit protein uL18 (117 aa).

It belongs to the universal ribosomal protein uL18 family. In terms of assembly, part of the 50S ribosomal subunit; part of the 5S rRNA/L5/L18/L25 subcomplex. Contacts the 5S and 23S rRNAs.

Functionally, this is one of the proteins that bind and probably mediate the attachment of the 5S RNA into the large ribosomal subunit, where it forms part of the central protuberance. The protein is Large ribosomal subunit protein uL18 of Aliivibrio fischeri (strain MJ11) (Vibrio fischeri).